Here is a 95-residue protein sequence, read N- to C-terminus: Co-chaperonin GroES (95 aa).

The protein belongs to the GroES chaperonin family. Heptamer of 7 subunits arranged in a ring. Interacts with the chaperonin GroEL.

The protein resides in the cytoplasm. Functionally, together with the chaperonin GroEL, plays an essential role in assisting protein folding. The GroEL-GroES system forms a nano-cage that allows encapsulation of the non-native substrate proteins and provides a physical environment optimized to promote and accelerate protein folding. GroES binds to the apical surface of the GroEL ring, thereby capping the opening of the GroEL channel. The protein is Co-chaperonin GroES of Chlorobium phaeobacteroides (strain BS1).